The chain runs to 118 residues: Small ribosomal subunit protein uS13 (118 aa).

The disordered stretch occupies residues 94 to 118; the sequence is GLPVRGQRTKTNARTRKGPRKPIRK.

This sequence belongs to the universal ribosomal protein uS13 family. Part of the 30S ribosomal subunit. Forms a loose heterodimer with protein S19. Forms two bridges to the 50S subunit in the 70S ribosome.

Functionally, located at the top of the head of the 30S subunit, it contacts several helices of the 16S rRNA. In the 70S ribosome it contacts the 23S rRNA (bridge B1a) and protein L5 of the 50S subunit (bridge B1b), connecting the 2 subunits; these bridges are implicated in subunit movement. Contacts the tRNAs in the A and P-sites. The chain is Small ribosomal subunit protein uS13 from Pseudomonas aeruginosa (strain LESB58).